A 153-amino-acid polypeptide reads, in one-letter code: Natriuretic peptides A (153 aa).

The N-terminal stretch at 1–25 is a signal peptide; sequence MGPFSTITVSFLFCLAFWHPDQIGA. 2 consecutive propeptides follow at residues 26 to 123 and 93 to 103; these read NPVY…TAPR and DGEALGRSTWE. The disordered stretch occupies residues 54–101; the sequence is EDEAVPPQALSEQSDEAGAALSPLPEVPPWTGEVSPAQRDGEALGRST. A Phosphoserine modification is found at S129. C130 and C146 form a disulfide bridge. Residues 147-151 are important for degradation of atrial natriuretic peptide by IDE; that stretch reads NSFRY.

The protein belongs to the natriuretic peptide family. In terms of assembly, homodimer; disulfide-linked antiparallel dimer. Post-translationally, the precursor molecule is proteolytically cleaved by CORIN at Arg-123 to produce the atrial natriuretic peptide. Undergoes further proteolytic cleavage by unknown proteases to give rise to long-acting natriuretic peptide, vessel dilator and kaliuretic peptide. Additional processing gives rise to the auriculin and atriopeptin peptides. In the kidneys, alternative processing by an unknown protease results in the peptide urodilatin. Cleavage by MME initiates degradation of the factor and thereby regulates its activity. Degradation by IDE results in reduced activation of NPR1 (in vitro). During IDE degradation, the resulting products can temporarily stimulate NPR2 to produce cGMP, before the fragments are completely degraded and inactivated by IDE (in vitro). In terms of processing, degraded by IDE. Post-translationally, phosphorylation on Ser-129 decreases vasorelaxant activity.

Its subcellular location is the secreted. The protein localises to the perikaryon. The protein resides in the cell projection. Hormone that plays a key role in mediating cardio-renal homeostasis, and is involved in vascular remodeling and regulating energy metabolism. Acts by specifically binding and stimulating NPR1 to produce cGMP, which in turn activates effector proteins, such as PRKG1, that drive various biological responses. Regulates vasodilation, natriuresis, diuresis and aldosterone synthesis and is therefore essential for regulating blood pressure, controlling the extracellular fluid volume and maintaining the fluid-electrolyte balance. Also involved in inhibiting cardiac remodeling and cardiac hypertrophy by inducing cardiomyocyte apoptosis and attenuating the growth of cardiomyocytes and fibroblasts. Plays a role in female pregnancy by promoting trophoblast invasion and spiral artery remodeling in uterus, and thus prevents pregnancy-induced hypertension. In adipose tissue, acts in various cGMP- and PKG-dependent pathways to regulate lipid metabolism and energy homeostasis. This includes up-regulating lipid metabolism and mitochondrial oxygen utilization by activating the AMP-activated protein kinase (AMPK), and increasing energy expenditure by acting via MAPK11 to promote the UCP1-dependent thermogenesis of brown adipose tissue. Binds the clearance receptor NPR3 which removes the hormone from circulation. Functionally, may have a role in cardio-renal homeostasis through regulation of natriuresis, diuresis, vasodilation, and inhibiting aldosterone synthesis. In vitro, promotes the production of cGMP and induces vasodilation. May promote natriuresis, at least in part, by enhancing prostaglandin E2 synthesis resulting in the inhibition of renal Na+-K+-ATPase. However reports on the involvement of this peptide in mammal blood volume and blood pressure homeostasis are conflicting; according to a report, in vivo it is not sufficient to activate cGMP and does not inhibit collecting duct transport nor effect diuresis and natriuresis. Appears to bind to specific receptors that are distinct from the receptors bound by atrial natriuretic peptide and vessel dilator. Possibly enhances protein excretion in urine by decreasing proximal tubular protein reabsorption. Its function is as follows. May have a role in cardio-renal homeostasis through regulation of natriuresis, diuresis, and vasodilation. In vitro, promotes the production of cGMP and induces vasodilation. May promote natriuresis, at least in part, by enhancing prostaglandin E2 synthesis resulting in the inhibition of renal Na+-K+-ATPase. However reports on the involvement of this peptide in mammal blood volume and blood pressure homeostasis are conflicting; according to a report it is not sufficient to activate cGMP and does not inhibit collecting duct transport nor effect diuresis and natriuresis. Appears to bind to specific receptors that are distinct from the receptors bound by the atrial natriuretic and long-acting natriuretic peptides. Possibly functions in protein excretion in urine by maintaining the integrity of the proximal tubules and enhancing protein excretion by decreasing proximal tubular protein reabsorption. In terms of biological role, may have a role in cardio-renal homeostasis through regulation of diuresis and inhibiting aldosterone synthesis. In vitro, promotes the production of cGMP and induces vasodilation. May promote natriuresis, at least in part, by enhancing prostaglandin E2 synthesis resulting in the inhibition of renal Na+-K+-ATPase. May have a role in potassium excretion but not sodium excretion (natriuresis). Possibly enhances protein excretion in urine by decreasing proximal tubular protein reabsorption. Hormone produced in the kidneys that appears to be important for maintaining cardio-renal homeostasis. Mediates vasodilation, natriuresis and diuresis primarily in the renal system, in order to maintain the extracellular fluid volume and control the fluid-electrolyte balance. Specifically binds and stimulates cGMP production by renal transmembrane receptors, likely NPR1. Urodilatin not ANP, may be the natriuretic peptide responsible for the regulation of sodium and water homeostasis in the kidney. Functionally, may have a role in cardio-renal homeostasis through regulation of natriuresis and vasodilation. In vivo promotes natriuresis and in vitro, vasodilates renal artery strips. Its function is as follows. May have a role in cardio-renal homeostasis through regulation of regulation of natriuresis and vasodilation. In vivo promotes natriuresis. In vitro, vasodilates intestinal smooth muscle but not smooth muscle strips. In terms of biological role, may have a role in cardio-renal homeostasis through regulation of natriuresis and vasodilation. In vivo promotes natriuresis. In vitro, selectively vasodilates intestinal and vascular smooth muscle strips. May have a role in cardio-renal homeostasis through regulation of natriuresis and vasodilation. In vivo promotes natriuresis. In vitro, selectively vasodilates intestinal smooth muscle but not vascular smooth muscle strips. This chain is Natriuretic peptides A (NPPA), found in Oryctolagus cuniculus (Rabbit).